Consider the following 280-residue polypeptide: Myelin proteolipid protein B (280 aa).

The Cytoplasmic segment spans residues 1-10 (MGWHDGCIRC). Residues C7 and C10 are each lipidated (S-palmitoyl cysteine). The chain crosses the membrane as a helical span at residues 11–36 (MVGVPFASVIATVLCFAGVALFCGCG). Over 37-59 (HEALSGTEKLIETYFSKNYQEYE) the chain is Extracellular. Residues 60 to 88 (YLIHVINAFQYVIYGIAIFFFLYGILLLA) form a helical membrane-spanning segment. Over 89–152 (EGFYTTTAIK…LGKWLGHPDK (64 aa)) the chain is Cytoplasmic. Residues C140 and C142 are each lipidated (S-palmitoyl cysteine). Residues 153-179 (FVGVTYVITILWILIFACSAVPVYIYF) traverse the membrane as a helical segment. Topologically, residues 180-239 (NTWVTCQSIAFPGKTTTSVSTLCLDARMYGVLPWNAFPGKVCGTSLLAICKTSEFQMTFH) are extracellular. 2 cysteine pairs are disulfide-bonded: C185–C229 and C202–C221. A helical transmembrane segment spans residues 240–269 (LFIAAFVGAAATLVALLTYMVGASFNYAVL). Residues 270-280 (RVTGRSDRSKF) lie on the Cytoplasmic side of the membrane.

The protein belongs to the myelin proteolipid protein family.

The protein localises to the cell membrane. This is the major myelin protein from the central nervous system. It plays an important role in the formation or maintenance of the multilamellar structure of myelin. This chain is Myelin proteolipid protein B (plp1-b), found in Xenopus laevis (African clawed frog).